The following is a 90-amino-acid chain: MARVTVQDAVEKIGNRFDLVLVAARRARQMQSGGKDALVPEENDKPTVIALREIEEGLITKDVLDARERQEQQEQEAAELAAVSSIMHNR.

The tract at residues 70-90 is disordered; the sequence is QEQQEQEAAELAAVSSIMHNR.

The protein belongs to the RNA polymerase subunit omega family. In terms of assembly, the RNAP catalytic core consists of 2 alpha, 1 beta, 1 beta' and 1 omega subunit. When a sigma factor is associated with the core the holoenzyme is formed, which can initiate transcription.

The enzyme catalyses RNA(n) + a ribonucleoside 5'-triphosphate = RNA(n+1) + diphosphate. Its function is as follows. Promotes RNA polymerase assembly. Latches the N- and C-terminal regions of the beta' subunit thereby facilitating its interaction with the beta and alpha subunits. In Vibrio cholerae serotype O1 (strain ATCC 39541 / Classical Ogawa 395 / O395), this protein is DNA-directed RNA polymerase subunit omega.